The following is a 193-amino-acid chain: Ion-translocating oxidoreductase complex subunit A (193 aa).

The next 6 helical transmembrane spans lie at 5–25 (FLLF…FLGL), 39–59 (IGMG…SWLV), 62–82 (FILL…LVIA), 102–122 (LLGI…VALL), 134–154 (AIYG…FAAI), and 171–191 (SIGL…SGLV).

It belongs to the NqrDE/RnfAE family. As to quaternary structure, the complex is composed of six subunits: RnfA, RnfB, RnfC, RnfD, RnfE and RnfG.

It localises to the cell inner membrane. In terms of biological role, part of a membrane-bound complex that couples electron transfer with translocation of ions across the membrane. The sequence is that of Ion-translocating oxidoreductase complex subunit A from Photorhabdus laumondii subsp. laumondii (strain DSM 15139 / CIP 105565 / TT01) (Photorhabdus luminescens subsp. laumondii).